The sequence spans 182 residues: Peptidyl-prolyl cis-trans isomerase ssp-1 (182 aa).

A WW domain is found at 7 to 41 (TGLPEDWEVRHSQSKNLPYYFNSATKTSRWEPPSG). One can recognise a PpiC domain in the interval 71–182 (QGKIRCAHLL…SGLHLIERLE (112 aa)).

It carries out the reaction [protein]-peptidylproline (omega=180) = [protein]-peptidylproline (omega=0). In terms of biological role, site-specific PPIase with respect to the amino acid N-terminal to the proline residue. Peptides with glutamate, phosphoserine, or phosphothreonine in the -1 position are the best substrates. It is not only able to isomerize small peptides but is also active in protein folding. The sequence is that of Peptidyl-prolyl cis-trans isomerase ssp-1 (ssp-1) from Neurospora crassa (strain ATCC 24698 / 74-OR23-1A / CBS 708.71 / DSM 1257 / FGSC 987).